The sequence spans 92 residues: Small ribosomal subunit protein uS19c (92 aa).

Positions 73 to 92 (EFSPTRTYRGHAKKDKKAKR) are disordered. Residues 80–92 (YRGHAKKDKKAKR) show a composition bias toward basic residues.

This sequence belongs to the universal ribosomal protein uS19 family.

It localises to the plastid. It is found in the chloroplast. Protein S19 forms a complex with S13 that binds strongly to the 16S ribosomal RNA. The sequence is that of Small ribosomal subunit protein uS19c (rps19) from Chlamydomonas reinhardtii (Chlamydomonas smithii).